The chain runs to 634 residues: Pentatricopeptide repeat-containing protein At5g14080 (634 aa).

PPR repeat units lie at residues 81 to 115 (DSIS…KILL), 116 to 150 (DSSV…GQEI), 151 to 185 (HPDV…GVSL), 186 to 220 (NTLG…NLNI), 222 to 256 (GSII…DCKP), 257 to 291 (DFMA…GVAP), 292 to 326 (RSSD…KFPM), 327 to 360 (DNDI…GKLP), 361 to 395 (AIRT…GYFS), 396 to 430 (ELQS…GLAP), 431 to 465 (DVSL…GCKM), 466 to 500 (NLTT…GIEP), and 501 to 535 (DETI…DHKT).

Belongs to the PPR family. P subfamily.

The sequence is that of Pentatricopeptide repeat-containing protein At5g14080 from Arabidopsis thaliana (Mouse-ear cress).